We begin with the raw amino-acid sequence, 58 residues long: Large ribosomal subunit protein uL30 (58 aa).

The protein belongs to the universal ribosomal protein uL30 family. As to quaternary structure, part of the 50S ribosomal subunit.

This is Large ribosomal subunit protein uL30 from Pseudomonas entomophila (strain L48).